The chain runs to 59 residues: Gonadotropin-releasing hormone receptor (59 aa).

Residues 1–2 are Cytoplasmic-facing; it reads VA. A helical transmembrane segment spans residues 3-23; the sequence is FATSFTVCWTPYYVLGIWYWF. The Extracellular segment spans residues 24–37; sequence DPEMLNRVSDPVNH. Residues 38-58 form a helical membrane-spanning segment; it reads FFFLFAFLNPCFDPLIYGYFS. Position 59 (Leu59) is a topological domain, cytoplasmic.

It belongs to the G-protein coupled receptor 1 family.

It is found in the cell membrane. Its function is as follows. Receptor for gonadotropin releasing hormone (GnRH) that mediates the action of GnRH to stimulate the secretion of the gonadotropic hormones luteinizing hormone (LH) and follicle-stimulating hormone (FSH). This receptor mediates its action by association with G-proteins that activate a phosphatidylinositol-calcium second messenger system. The sequence is that of Gonadotropin-releasing hormone receptor (GNRHR) from Macaca mulatta (Rhesus macaque).